The sequence spans 156 residues: Small ribosomal subunit protein uS7 (156 aa).

Belongs to the universal ribosomal protein uS7 family. In terms of assembly, part of the 30S ribosomal subunit. Contacts proteins S9 and S11.

Its function is as follows. One of the primary rRNA binding proteins, it binds directly to 16S rRNA where it nucleates assembly of the head domain of the 30S subunit. Is located at the subunit interface close to the decoding center, probably blocks exit of the E-site tRNA. This is Small ribosomal subunit protein uS7 from Picosynechococcus sp. (strain ATCC 27264 / PCC 7002 / PR-6) (Agmenellum quadruplicatum).